Here is a 530-residue protein sequence, read N- to C-terminus: Probable serine/threonine-protein kinase fnkB (530 aa).

A Protein kinase domain is found at 11-268 (WEIVETLKSN…SITLIDHPFL (258 aa)). ATP contacts are provided by residues 17 to 25 (LKSNVFKVN) and lysine 43. Catalysis depends on aspartate 131, which acts as the Proton acceptor.

Belongs to the protein kinase superfamily. STE Ser/Thr protein kinase family. The cofactor is Mg(2+).

It carries out the reaction L-seryl-[protein] + ATP = O-phospho-L-seryl-[protein] + ADP + H(+). The catalysed reaction is L-threonyl-[protein] + ATP = O-phospho-L-threonyl-[protein] + ADP + H(+). This chain is Probable serine/threonine-protein kinase fnkB, found in Dictyostelium discoideum (Social amoeba).